A 317-amino-acid polypeptide reads, in one-letter code: Acetyl-coenzyme A carboxylase carboxyl transferase subunit alpha (317 aa).

A CoA carboxyltransferase C-terminal domain is found at 40–293; it reads LEKRSADALK…GDIIAASLRS (254 aa).

Belongs to the AccA family. Acetyl-CoA carboxylase is a heterohexamer composed of biotin carboxyl carrier protein (AccB), biotin carboxylase (AccC) and two subunits each of ACCase subunit alpha (AccA) and ACCase subunit beta (AccD).

The protein resides in the cytoplasm. It carries out the reaction N(6)-carboxybiotinyl-L-lysyl-[protein] + acetyl-CoA = N(6)-biotinyl-L-lysyl-[protein] + malonyl-CoA. It functions in the pathway lipid metabolism; malonyl-CoA biosynthesis; malonyl-CoA from acetyl-CoA: step 1/1. Functionally, component of the acetyl coenzyme A carboxylase (ACC) complex. First, biotin carboxylase catalyzes the carboxylation of biotin on its carrier protein (BCCP) and then the CO(2) group is transferred by the carboxyltransferase to acetyl-CoA to form malonyl-CoA. The chain is Acetyl-coenzyme A carboxylase carboxyl transferase subunit alpha from Brucella melitensis biotype 2 (strain ATCC 23457).